We begin with the raw amino-acid sequence, 816 residues long: Probable E3 ubiquitin-protein ligase hulA (816 aa).

The C2 domain maps to 1–112 (MGSNLPAQPN…QMGGDEMLTR (112 aa)). Disordered stretches follow at residues 134 to 238 (NLST…GWER) and 254 to 354 (RTTT…YFVD). The segment covering 160–178 (VPQVAPSSSHPAASGAAPV) has biased composition (low complexity). Residues 181 to 192 (SASNPSLNPQRV) show a composition bias toward polar residues. Low complexity predominate over residues 193–213 (PSTTRPSSTAAPASAAGAAAS). 2 stretches are compositionally biased toward polar residues: residues 214 to 227 (NTHGSRTNLSSFED) and 254 to 267 (RTTTWTRPSSNYNE). In terms of domain architecture, WW 1 spans 230–263 (GRLPAGWERREDNLGRTYYVDHNTRTTTWTRPSS). A compositionally biased stretch (basic and acidic residues) spans 268 to 295 (HAQRSQREANMQLERRAHQSRMLPEDRT). Polar residues predominate over residues 296-310 (GANSPNLPESSQQAH). Residues 325 to 334 (ATGATTAGTG) show a composition bias toward low complexity. WW domains follow at residues 334 to 367 (GELPPGWEQRTTPEGRPYFVDHNTRTTTWVDPRR) and 394 to 427 (GPLPSGWEMRLTNTARVYFVDHNTKTTTWDDPRL). An HECT domain is found at 483-816 (SASDLKKRLM…VEETLGFGQE (334 aa)). Cys-784 functions as the Glycyl thioester intermediate in the catalytic mechanism.

This sequence belongs to the RSP5/NEDD4 family. In terms of assembly, interacts with creD.

It localises to the cytoplasm. The catalysed reaction is S-ubiquitinyl-[E2 ubiquitin-conjugating enzyme]-L-cysteine + [acceptor protein]-L-lysine = [E2 ubiquitin-conjugating enzyme]-L-cysteine + N(6)-ubiquitinyl-[acceptor protein]-L-lysine.. It functions in the pathway protein modification; protein ubiquitination. In terms of biological role, E3 ubiquitin-protein ligase which accepts ubiquitin from an E2 ubiquitin-conjugating enzyme in the form of a thioester and then directly transfers the ubiquitin to targeted substrates. Probably involved in the regulatory network controlling carbon source utilization. The polypeptide is Probable E3 ubiquitin-protein ligase hulA (hulA) (Neosartorya fischeri (strain ATCC 1020 / DSM 3700 / CBS 544.65 / FGSC A1164 / JCM 1740 / NRRL 181 / WB 181) (Aspergillus fischerianus)).